The following is a 519-amino-acid chain: F-box only protein 31-A (519 aa).

The tract at residues 11 to 37 is disordered; sequence GQSGGCRRRQQRKGAGNDPELEDEEEE. The F-box domain occupies 54–100; sequence PHSLLLLPPEILVEIFSLLPGTELGGLAQVCSKFRQILTTDTIWKRR. 4 residues coordinate Zn(2+): Cys-196, His-204, Cys-220, and His-226. Residues 369-390 are compositionally biased toward basic and acidic residues; sequence REQRQTDNEEDDGRGAGPDKAE. Residues 369-424 form a disordered region; the sequence is REQRQTDNEEDDGRGAGPDKAEPAQQPAPLLRPPNEDANGADDDGDGGEQKPPNVQ.

Belongs to the FBXO31 family. As to quaternary structure, part of a SCF (SKP1-cullin-F-box) protein ligase complex SCF(FBXO31).

The protein localises to the cytoplasm. It functions in the pathway protein modification; protein ubiquitination. In terms of biological role, substrate-recognition component of the SCF(FBXO31) protein ligase complex, which specifically mediates the ubiquitination of proteins amidated at their C-terminus in response to oxidative stress, leading to their degradation by the proteasome. Fbxo31 specifically recognizes and binds C-terminal peptides bearing an amide: C-terminal amidation in response to oxidative stress takes place following protein fragmentation. The SCF(FBXO31) also plays a role in G1 arrest following DNA damage by mediating ubiquitination of phosphorylated cyclin-D1 (ccnd1), promoting its degradation by the proteasome, resulting in G1 arrest. The SCF(FBXO31) complex is however not a major regulator of ccnd1 stability during the G1/S transition. The sequence is that of F-box only protein 31-A (fbxo31-a) from Xenopus laevis (African clawed frog).